We begin with the raw amino-acid sequence, 77 residues long: RNA-binding protein Hfq (77 aa).

One can recognise a Sm domain in the interval 9–69; sequence DQFLNQLRKE…ISTFAPQKNV (61 aa).

The protein belongs to the Hfq family. Homohexamer.

Its function is as follows. RNA chaperone that binds small regulatory RNA (sRNAs) and mRNAs to facilitate mRNA translational regulation in response to envelope stress, environmental stress and changes in metabolite concentrations. Also binds with high specificity to tRNAs. The polypeptide is RNA-binding protein Hfq (Shouchella clausii (strain KSM-K16) (Alkalihalobacillus clausii)).